The chain runs to 99 residues: Transmembrane protein 14A (99 aa).

3 helical membrane-spanning segments follow: residues 1 to 21, 24 to 44, and 79 to 99; these read MDLIGFGYAALVTFGSILGYK, GGVLSLIAGLFVGFLAGYGAY, and PAGLVAGLSLLMILRLVLLLL.

It belongs to the TMEM14 family.

It is found in the mitochondrion membrane. The protein localises to the endoplasmic reticulum membrane. Its function is as follows. Inhibits apoptosis via negative regulation of the mitochondrial outer membrane permeabilization involved in apoptotic signaling pathway. The polypeptide is Transmembrane protein 14A (TMEM14A) (Bos taurus (Bovine)).